We begin with the raw amino-acid sequence, 59 residues long: Protein QUA-QUINE STARCH (59 aa).

In terms of tissue distribution, expressed in hypocotyls, leaves, vasculature, hydathodes, trichomes, pedicels, sepals, filaments, mature pollen, stigma papillae, styles, siliques, root and shoot tips, but not in shoot meristem, petals or root epidermis.

The protein resides in the cytoplasm. Involved in regulating carbon and nitrogen allocation to starch and protein. The chain is Protein QUA-QUINE STARCH from Arabidopsis thaliana (Mouse-ear cress).